The chain runs to 142 residues: Large ribosomal subunit protein uL11 (142 aa).

It belongs to the universal ribosomal protein uL11 family. As to quaternary structure, part of the ribosomal stalk of the 50S ribosomal subunit. Interacts with L10 and the large rRNA to form the base of the stalk. L10 forms an elongated spine to which L12 dimers bind in a sequential fashion forming a multimeric L10(L12)X complex. One or more lysine residues are methylated.

Its function is as follows. Forms part of the ribosomal stalk which helps the ribosome interact with GTP-bound translation factors. The chain is Large ribosomal subunit protein uL11 from Buchnera aphidicola subsp. Acyrthosiphon pisum (strain APS) (Acyrthosiphon pisum symbiotic bacterium).